The primary structure comprises 206 residues: uncharacterized protein (206 aa).

Disordered stretches follow at residues 64-123 and 155-206; these read NTES…DPSL and VTTP…SSGG. A compositionally biased stretch (polar residues) spans 66 to 79; the sequence is ESTQKTATTQQQGL. Residues 97-107 show a composition bias toward low complexity; sequence AENNAQANQSE. Positions 108–118 are enriched in basic and acidic residues; the sequence is NRAESTTKAES. The span at 155–167 shows a compositional bias: low complexity; that stretch reads VTTPTGQVVQPQT. Residues 182–198 are compositionally biased toward polar residues; it reads GSMNSKPVSRGGFSSPN.

This is an uncharacterized protein from Haemophilus influenzae (strain ATCC 51907 / DSM 11121 / KW20 / Rd).